The primary structure comprises 260 residues: UPF0246 protein Bmul_1054/BMULJ_02209 (260 aa).

The protein belongs to the UPF0246 family.

The polypeptide is UPF0246 protein Bmul_1054/BMULJ_02209 (Burkholderia multivorans (strain ATCC 17616 / 249)).